Consider the following 923-residue polypeptide: MDYKSTLNLPVTDFPMKANLPQREPEILAAWQQGDLYGTIAKAGKGKPRYVLHDGPPYANGHIHIGHALNKILKDIILKSKRMQGFDAPYVPGWDCHGLPIELQVEKNLGSKKHETTKLQMRKQCREYAEKFVHVQRAEFERLGVLGDWDRPYLTMSYDYEGITARELARFAENGGLYKGKKPVHWCSSCVTALAEAEVEYADKTSPSIYVKFLLQDDIGGAVPALAGKRVSLVIWTTTPWTIPANLAVALHPELDYVALETGGEVLVVAEGLKDAFMAATGVQGDVIATFRADILYRKRCKHPFYDRDSIVLLGEHVTLDAGTGCVHTAPGHGQEDYELALVEGLDIYNPVDNRGRYIQSLEFFGGMFVFDANAAVMEKLREVGALVGQGSVEHSYPHCWRCKKPIIFRATEQWFISMEKNDLRQKALTEIDRVSWVPKWGRERIHGMIENRPDWCISRQRSWGVPITAFYCTECGEILADGKTMHHVADLFMAGGADLWYEKEAAELLPPGTVCPQCGKSAFEKEMDILDVWFDSGVSHAAVLENRPELGSPANMYLEGSDQHRGWFHSSLLASVGTRGVAPYREVLTHGFVVDGSGRKMSKSVGNVVAPEEVIKKYGAEILRLWVAAQDYRDDVRISQEILTRLAEAYRRIRNTCRYLLGNLNDFDPDVDMVPYDRMTELDRWALHQLEVLKEKVAAAYNEYEFHILYHAVNGFCTVEMSAFYLDIIKERYTSRKDAPERRSAQSVMYLVLESLVTLMAPVLSFTADEVWGYMPKRSESSVHLATFPEFRPEWKDESLVERWARIMAVRGDVSKALEQARVQKTIGHSLDAAVTLAAEPGLLSFLQEYAGELSTIFIVSRVDLVEEGAGDYPAAEGVSGLRIGVSAAPGEKCERCWHYDEEIGGDSEHPTLCPKCAAAVK.

Positions 57-67 (PYANGHIHIGH) match the 'HIGH' region motif. Glu-560 contacts L-isoleucyl-5'-AMP. Residues 601-605 (KMSKS) carry the 'KMSKS' region motif. Position 604 (Lys-604) interacts with ATP. 4 residues coordinate Zn(2+): Cys-895, Cys-898, Cys-915, and Cys-918.

This sequence belongs to the class-I aminoacyl-tRNA synthetase family. IleS type 1 subfamily. As to quaternary structure, monomer. It depends on Zn(2+) as a cofactor.

The protein localises to the cytoplasm. The enzyme catalyses tRNA(Ile) + L-isoleucine + ATP = L-isoleucyl-tRNA(Ile) + AMP + diphosphate. Functionally, catalyzes the attachment of isoleucine to tRNA(Ile). As IleRS can inadvertently accommodate and process structurally similar amino acids such as valine, to avoid such errors it has two additional distinct tRNA(Ile)-dependent editing activities. One activity is designated as 'pretransfer' editing and involves the hydrolysis of activated Val-AMP. The other activity is designated 'posttransfer' editing and involves deacylation of mischarged Val-tRNA(Ile). The chain is Isoleucine--tRNA ligase from Geobacter sulfurreducens (strain ATCC 51573 / DSM 12127 / PCA).